A 601-amino-acid polypeptide reads, in one-letter code: N-acetyltransferase ESCO2 (601 aa).

Phosphoserine is present on residues Ser29, Ser75, Ser223, and Ser244. The tract at residues 222–243 is disordered; that stretch reads SSLENEPSLGRTQKSKSEVIED. Residues 282 to 305 show a composition bias toward basic and acidic residues; sequence KEKLIKDSSDDRVSSKEHKVDKNE. The disordered stretch occupies residues 282-315; that stretch reads KEKLIKDSSDDRVSSKEHKVDKNEAFSSEDSLGE. The segment covering 306–315 has biased composition (polar residues); sequence AFSSEDSLGE. Ser312 is subject to Phosphoserine. The segment at 387–411 adopts a CCHH-type zinc-finger fold; it reads TVCKSCGMIYTASNPEDEMQHVQHH. Residue Ser512 is modified to Phosphoserine.

Belongs to the acetyltransferase family. ECO subfamily. In terms of tissue distribution, widely expressed in fetal tissues. In adult, it is expressed in thymus, placenta and small intestine.

It is found in the nucleus. The protein localises to the chromosome. The catalysed reaction is L-lysyl-[protein] + acetyl-CoA = N(6)-acetyl-L-lysyl-[protein] + CoA + H(+). Functionally, acetyltransferase required for the establishment of sister chromatid cohesion. Couples the processes of cohesion and DNA replication to ensure that only sister chromatids become paired together. In contrast to the structural cohesins, the deposition and establishment factors are required only during the S phase. Acetylates the cohesin component SMC3. This is N-acetyltransferase ESCO2 from Homo sapiens (Human).